Reading from the N-terminus, the 31-residue chain is Nemertide alpha-5 (31 aa).

Disulfide bonds link C2–C16, C9–C20, and C15–C26. A 4-hydroxyproline mark is found at P28 and P29.

It belongs to the nemertide family. As to expression, confined to the epidermis and to the mucus layer.

It localises to the secreted. Highly potent toxin against both insect and some mammalian sodium channels (Nav). It potently inhibits inactivation of insect sodium channels of B.germanica (BgNav1) (EC(50)=7.8 nM) and also delays the inactivation of mammalian Nav with potent activity on Nav1.3/SCN3A and Nav1.4/SCN4A (hNav1.1/SCN1A; EC(50)=102.1 nM, rNav1.2/SCN2A; EC(50)=156.1 nM, rNav1.3/SCN3A; EC(50)=9.4 nM, rNav1.4/SCN4A; EC(50)=15.4 nM, hNav1.5/SCN5A; EC(50)=132.7 nM, mNav1.6/SCN8A; EC(50)=66.9 nM, hNav1.9/SCN9A; EC(50)=73 nM). 1 uM is enough to completely inhibits the inactivation, resulting in sustained non-inactivating currents. In addition, the toxin significantly enhances the recovery from inactivation, and the open state is not required for the toxin to interact with the channel. In vivo, injection into brine shrimp (Artemia salina) stops movement or causes death after 24 hours (EC(50)=0.4 uM). The protein is Nemertide alpha-5 of Ramphogordius pseudolacteus (Ribbon worm).